A 476-amino-acid chain; its full sequence is Aspartyl/glutamyl-tRNA(Asn/Gln) amidotransferase subunit B (476 aa).

The protein belongs to the GatB/GatE family. GatB subfamily. As to quaternary structure, heterotrimer of A, B and C subunits.

The enzyme catalyses L-glutamyl-tRNA(Gln) + L-glutamine + ATP + H2O = L-glutaminyl-tRNA(Gln) + L-glutamate + ADP + phosphate + H(+). It carries out the reaction L-aspartyl-tRNA(Asn) + L-glutamine + ATP + H2O = L-asparaginyl-tRNA(Asn) + L-glutamate + ADP + phosphate + 2 H(+). Functionally, allows the formation of correctly charged Asn-tRNA(Asn) or Gln-tRNA(Gln) through the transamidation of misacylated Asp-tRNA(Asn) or Glu-tRNA(Gln) in organisms which lack either or both of asparaginyl-tRNA or glutaminyl-tRNA synthetases. The reaction takes place in the presence of glutamine and ATP through an activated phospho-Asp-tRNA(Asn) or phospho-Glu-tRNA(Gln). This is Aspartyl/glutamyl-tRNA(Asn/Gln) amidotransferase subunit B from Neisseria meningitidis serogroup C (strain 053442).